Consider the following 858-residue polypeptide: Elongation factor 2 (858 aa).

The tr-type G domain maps to 17 to 362 (ANIRNMSVIA…MITIHLPSPV (346 aa)). Position 26–33 (26–33 (AHVDHGKS)) interacts with GTP. At threonine 54 the chain carries Phosphothreonine. Threonine 57 is subject to Phosphothreonine; by EEF2K. Threonine 59 is modified (phosphothreonine). At lysine 152 the chain carries N6-succinyllysine. GTP-binding positions include 158–161 (NKMD) and 216–218 (SGL). Lysine 235 is modified (N6-acetyllysine). Lysine 239 is modified (N6-acetyllysine; alternate). Lysine 239 participates in a covalent cross-link: Glycyl lysine isopeptide (Lys-Gly) (interchain with G-Cter in SUMO1); alternate. The residue at position 265 (tyrosine 265) is a Phosphotyrosine; by CSK. Lysine 272 is subject to N6-acetyllysine; alternate. Lysine 272 carries the post-translational modification N6-succinyllysine; alternate. Lysine 275 bears the N6-acetyllysine mark. A Glycyl lysine isopeptide (Lys-Gly) (interchain with G-Cter in SUMO) cross-link involves residue lysine 322. Position 325 is a phosphoserine (serine 325). Tyrosine 373 carries the phosphotyrosine; by CSK modification. Threonine 435 is modified (phosphothreonine). Lysine 439 and lysine 445 each carry N6-acetyllysine. Residue serine 502 is modified to Phosphoserine. N6,N6,N6-trimethyllysine; by EEF2KMT is present on lysine 525. Residue lysine 529 forms a Glycyl lysine isopeptide (Lys-Gly) (interchain with G-Cter in SUMO) linkage. Lysine 572 carries the post-translational modification N6-succinyllysine. Phosphoserine; by CDK2 is present on serine 595. Lysine 619 carries the N6-acetyllysine modification. A Diphthamide modification is found at histidine 715.

Belongs to the TRAFAC class translation factor GTPase superfamily. Classic translation factor GTPase family. EF-G/EF-2 subfamily. In terms of assembly, binds to 80S ribosomes. Actively translating ribosomes show mutually exclusive binding of eIF5a (EIF5A or EIF5A2) and EEF2/eEF2. Interacts with SERBP1; interaction sequesters EEF2/eEF2 at the A-site of the ribosome, thereby blocking the interaction sites of the mRNA-tRNA complex, promoting ribosome stabilization and hibernation. Interacts with HABP4; interaction takes place at the A-site of hibernating ribosomes and promotes ribosome stabilization. Component of the mRNA surveillance SURF complex, at least composed of ERF1, ERF3 (ERF3A or ERF3B), EEF2, UPF1/RENT1, SMG1, SMG8 and SMG9. Interacts with RBPMS2. In terms of processing, phosphorylation by EF-2 kinase completely inactivates EF-2; it requires prior phosphorylation by CDK2 at Ser-595 during mitotic prometaphase. Phosphorylation by CSK promotes SUMOylation, proteolytic cleavage, and nuclear translocation if the C-terminal fragment. Post-translationally, diphthamide is 2-[3-carboxyamido-3-(trimethyl-ammonio)propyl]histidine. ISGylated. In terms of processing, proteolytically processed at two sites following phosphorylation by CSK. Post-translationally, SUMOylated following phosphorylation by CSK, promotes proteolytic cleavage.

The protein localises to the cytoplasm. It is found in the nucleus. It carries out the reaction GTP + H2O = GDP + phosphate + H(+). Functionally, catalyzes the GTP-dependent ribosomal translocation step during translation elongation. During this step, the ribosome changes from the pre-translocational (PRE) to the post-translocational (POST) state as the newly formed A-site-bound peptidyl-tRNA and P-site-bound deacylated tRNA move to the P and E sites, respectively. Catalyzes the coordinated movement of the two tRNA molecules, the mRNA and conformational changes in the ribosome. This chain is Elongation factor 2 (EEF2), found in Pongo abelii (Sumatran orangutan).